The following is an 80-amino-acid chain: Iota-conotoxin-like r11c (80 aa).

An N-terminal signal peptide occupies residues 1–19 (MKLCLTFLLVLMILASVTG). The propeptide occupies 20–35 (EKSSKHTLSRAARVKN). 2 positions are modified to 4-hydroxyproline; partial: Pro-38 and Pro-47. 4 disulfides stabilise this stretch: Cys-41/Cys-55, Cys-48/Cys-58, Cys-54/Cys-63, and Cys-57/Cys-72. The residue at position 65 (Pro-65) is a 4-hydroxyproline. Residue Leu-78 is modified to D-leucine. A propeptide (removed by a carboxypeptidase) is located at residue Arg-80.

The natural D-Leu form of the peptide is more potent than the synthetic L-Leu form. As to expression, expressed by the venom duct.

It is found in the secreted. Functionally, iota-conotoxins bind to voltage-gated sodium channels (Nav) and act as agonists by shifting the voltage-dependence of activation to more hyperpolarized levels. Causes circular motion, convulsions, copious urination, rigid paralysis and death upon intracranial injection into mice. Causes unbalanced swimming, swimming in diagonal and vertical motion and death, when injected intraperitoneally into goldfish. L-Leu and D-Leu forms are active on both nerve and muscle. The chain is Iota-conotoxin-like r11c from Conus radiatus (Rayed cone).